Reading from the N-terminus, the 64-residue chain is Conotoxin VnMLCL-042 (64 aa).

The signal sequence occupies residues 1–19 (MLCLPVFIILLLLASPAAP). Positions 20 to 43 (NPLQTRIQSNLIRAGPEDANMKTD) are excised as a propeptide. M63 carries the methionine amide modification.

The protein belongs to the conotoxin T superfamily. In terms of tissue distribution, expressed by the venom duct.

It is found in the secreted. The protein is Conotoxin VnMLCL-042 of Conus ventricosus (Mediterranean cone).